A 401-amino-acid chain; its full sequence is Tyrosine--tRNA ligase (401 aa).

Residues 45-54 (PTAPDLHLGH) carry the 'HIGH' region motif. The 'KMSKS' region motif lies at 230–234 (KMSKS). Lysine 233 contacts ATP. One can recognise an S4 RNA-binding domain in the interval 339 to 399 (IWLAKALVEC…GKRKFAKLKV (61 aa)).

The protein belongs to the class-I aminoacyl-tRNA synthetase family. TyrS type 2 subfamily. In terms of assembly, homodimer.

Its subcellular location is the cytoplasm. It carries out the reaction tRNA(Tyr) + L-tyrosine + ATP = L-tyrosyl-tRNA(Tyr) + AMP + diphosphate + H(+). Its function is as follows. Catalyzes the attachment of tyrosine to tRNA(Tyr) in a two-step reaction: tyrosine is first activated by ATP to form Tyr-AMP and then transferred to the acceptor end of tRNA(Tyr). The polypeptide is Tyrosine--tRNA ligase (Campylobacter jejuni subsp. jejuni serotype O:2 (strain ATCC 700819 / NCTC 11168)).